The chain runs to 79 residues: Acyl carrier protein (79 aa).

Residues 2–77 (SEIGERVKKI…DATKFLEKNA (76 aa)) form the Carrier domain. Serine 37 is subject to O-(pantetheine 4'-phosphoryl)serine.

Belongs to the acyl carrier protein (ACP) family. In terms of processing, 4'-phosphopantetheine is transferred from CoA to a specific serine of apo-ACP by AcpS. This modification is essential for activity because fatty acids are bound in thioester linkage to the sulfhydryl of the prosthetic group.

It is found in the cytoplasm. It functions in the pathway lipid metabolism; fatty acid biosynthesis. Functionally, carrier of the growing fatty acid chain in fatty acid biosynthesis. The protein is Acyl carrier protein of Afipia carboxidovorans (strain ATCC 49405 / DSM 1227 / KCTC 32145 / OM5) (Oligotropha carboxidovorans).